A 630-amino-acid chain; its full sequence is Replication protein A 70 kDa DNA-binding subunit B (630 aa).

The segment at residues 200 to 282 (IIKVRVTSKG…KTVHNDYEMT (83 aa)) is a DNA-binding region (OB). A C4-type zinc finger spans residues 496–516 (CKTCNKKVTEAIGSGYWCEGC).

This sequence belongs to the replication factor A protein 1 family. As to quaternary structure, heterotrimer of RPA1, RPA2 and RPA3 (canonical replication protein A complex). Interacts with RPA2A. In terms of tissue distribution, expressed in root tips, roots, shoot apical meristem (SAM) and young leaves, and at lower levels in mature leaves, flag leaves and ears.

It is found in the nucleus. Functionally, component of the replication protein A complex (RPA) required for DNA recombination, repair and replication. The activity of RPA is mediated by single-stranded DNA binding and protein interactions. Probably involved in repair of double-strand DNA breaks (DSBs) induced by genotoxic stresses. The sequence is that of Replication protein A 70 kDa DNA-binding subunit B (RPA1B) from Oryza sativa subsp. japonica (Rice).